Consider the following 156-residue polypeptide: Ribonuclease H (156 aa).

An RNase H type-1 domain is found at 3–144 (ERKLIHIFTD…CDILARSAAE (142 aa)). 4 residues coordinate Mg(2+): Asp-12, Glu-50, Asp-72, and Asp-136.

This sequence belongs to the RNase H family. Monomer. It depends on Mg(2+) as a cofactor.

It localises to the cytoplasm. The catalysed reaction is Endonucleolytic cleavage to 5'-phosphomonoester.. Functionally, endonuclease that specifically degrades the RNA of RNA-DNA hybrids. This Shewanella putrefaciens (strain CN-32 / ATCC BAA-453) protein is Ribonuclease H.